The following is an 837-amino-acid chain: MFLWLFLIVSALISSTNADSDISVEICNVCSCVSVENVLYVNCEKVSVYRPNQLKPPWSNFYHLNFQNNFLNILYPNTFVNFSHAVSLHLGNNKLQNIEGGAFLGLSALKQLHLNNNELKILRADTFLGIENLEYLQADYNLIKYIERGAFNKLHKLKVLILNDNLISFLPDNIFRFASLTHLDIRGNRIQKLPYIGVLEHIGRVVELQLEDNPWNCSCDLLPLKAWLENMPYNIYIGEAICETPSDLYGRLLKETNKQELCPMGTGSDFDVRILPPSQQENGFTTPNGHTTQTTLHRLVTKPPKTTNPSKISGIVAGKALSNRNLSQIVSYQTRVPPLTPCPVPCFCKTHPSDLGLSVNCQEKNIQSMSELTPKPLNAKKLHVNGNNIKDVDISDFTEFEGLDLLHLGSNQITLIKGEVFHNLTNLRRLYLNGNQIERLYPEIFSGLHNLQYLYLEYNLIKEILAGTFDSMPNLQLLYLNNNLLKSLPVYIFSGAPLARLNLRNNKFMYLPVSGVLDQLQSLTQIDLEGNPWDCTCDLVALKLWLEKLNDGIVVKELKCETPVQFANIELKSLKNEILCPKLLNKPSATFTSPAPAITFTTPLGPIRSPPGGPVPLSILILSILVVLILTVFVAFCLLVFVLRRNKKPTVKHEGLGNSECGSMQLQLRKHDHKTNKKDGLSTEAFIPQTIEQMSKSHTCGLKESETGFMFSDPPGQKVMMRNAADKDKDLLHVDTRKRLSTIDELDELFPSRDSNVFIQNFLESKKEYNSIGVSGFEIRYPEKQQDKKNKKSLIGGNHSKIVVEQRKSEYFELKAKLQSSPDYLQVLEEQTALNKI.

The signal sequence occupies residues 1 to 18; it reads MFLWLFLIVSALISSTNA. At 19–618 the chain is on the extracellular side; sequence DSDISVEICN…SPPGGPVPLS (600 aa). 6 LRR repeats span residues 60-81, 84-105, 108-129, 132-153, 156-177, and 179-200; these read NFYH…TFVN, HAVS…AFLG, ALKQ…TFLG, NLEY…AFNK, KLKV…IFRF, and SLTH…GVLE. N81 carries N-linked (GlcNAc...) asparagine glycosylation. The LRRCT 1 domain occupies 213 to 264; the sequence is NPWNCSCDLLPLKAWLENMPYNIYIGEAICETPSDLYGRLLKETNKQELCPM. Residue N325 is glycosylated (N-linked (GlcNAc...) asparagine). The LRRNT domain maps to 333–375; it reads QTRVPPLTPCPVPCFCKTHPSDLGLSVNCQEKNIQSMSELTPK. LRR repeat units follow at residues 378–399, 402–423, 426–447, 450–471, 474–495, and 497–518; these read NAKK…DFTE, GLDL…VFHN, NLRR…IFSG, NLQY…TFDS, NLQL…IFSG, and PLAR…GVLD. N-linked (GlcNAc...) asparagine glycosylation is present at N423. The region spanning 531-582 is the LRRCT 2 domain; that stretch reads NPWDCTCDLVALKLWLEKLNDGIVVKELKCETPVQFANIELKSLKNEILCPK. Residues 619–639 form a helical membrane-spanning segment; the sequence is ILILSILVVLILTVFVAFCLL. The Cytoplasmic portion of the chain corresponds to 640 to 837; that stretch reads VFVLRRNKKP…LEEQTALNKI (198 aa).

It belongs to the SLITRK family. Interacts (via LRR 1 and 2 repeats) with PTPRD (via extracellular domain). In terms of tissue distribution, in the adult, significant expression is detected only in the brain. Broadly expressed in embryonic brain with highest expression in subventricular zone, subplate, cortical plate, pyramidal cell layer of hippocampus, thalamus and hypothalamus.

Its subcellular location is the membrane. The protein resides in the cell membrane. In terms of biological role, it is involved in synaptogenesis and promotes synapse differentiation. Suppresses neurite outgrowth. The sequence is that of SLIT and NTRK-like protein 4 (Slitrk4) from Mus musculus (Mouse).